Consider the following 1399-residue polypeptide: DNA-directed RNA polymerase subunit beta' (1399 aa).

4 residues coordinate Zn(2+): C70, C72, C85, and C88. Residues D460, D462, and D464 each coordinate Mg(2+). Positions 814, 888, 895, and 898 each coordinate Zn(2+).

It belongs to the RNA polymerase beta' chain family. As to quaternary structure, the RNAP catalytic core consists of 2 alpha, 1 beta, 1 beta' and 1 omega subunit. When a sigma factor is associated with the core the holoenzyme is formed, which can initiate transcription. It depends on Mg(2+) as a cofactor. Zn(2+) serves as cofactor.

The enzyme catalyses RNA(n) + a ribonucleoside 5'-triphosphate = RNA(n+1) + diphosphate. Its function is as follows. DNA-dependent RNA polymerase catalyzes the transcription of DNA into RNA using the four ribonucleoside triphosphates as substrates. The sequence is that of DNA-directed RNA polymerase subunit beta' from Stutzerimonas stutzeri (strain A1501) (Pseudomonas stutzeri).